The following is a 336-amino-acid chain: Cell division protein ZipA (336 aa).

Residues 1 to 2 are Periplasmic-facing; it reads ME. A helical membrane pass occupies residues 3–23; it reads LHILFFILAGLLIAVLIGFSL. Residues 24 to 336 are Cytoplasmic-facing; the sequence is WSARREKSRI…SRQAYLARVS (313 aa).

Belongs to the ZipA family. As to quaternary structure, interacts with FtsZ via their C-terminal domains.

It is found in the cell inner membrane. Essential cell division protein that stabilizes the FtsZ protofilaments by cross-linking them and that serves as a cytoplasmic membrane anchor for the Z ring. Also required for the recruitment to the septal ring of downstream cell division proteins. This is Cell division protein ZipA from Actinobacillus pleuropneumoniae serotype 5b (strain L20).